Reading from the N-terminus, the 233-residue chain is Uridylate kinase (233 aa).

Gly9–Ser10 contacts ATP. Gly43 is a binding site for UMP. Positions 44 and 48 each coordinate ATP. Residues Asp65 and Val113–Thr119 each bind UMP. ATP-binding residues include Thr139, Tyr145, and Asp148.

The protein belongs to the UMP kinase family. As to quaternary structure, homohexamer.

It is found in the cytoplasm. The catalysed reaction is UMP + ATP = UDP + ADP. It functions in the pathway pyrimidine metabolism; CTP biosynthesis via de novo pathway; UDP from UMP (UMPK route): step 1/1. With respect to regulation, inhibited by UTP. Catalyzes the reversible phosphorylation of UMP to UDP. The protein is Uridylate kinase of Methanosarcina acetivorans (strain ATCC 35395 / DSM 2834 / JCM 12185 / C2A).